Reading from the N-terminus, the 732-residue chain is Polyribonucleotide nucleotidyltransferase (732 aa).

Positions 503 and 509 each coordinate Mg(2+). The 60-residue stretch at 570-629 (PRLTAIQVPVESIGLIIGKGGETIRSITEETGAEINIEDDGTVTIACSSNEGTKGAVEII) folds into the KH domain. Residues 639–713 (GTVYIGKVRD…GKTRFALSIK (75 aa)) form the S1 motif domain.

Belongs to the polyribonucleotide nucleotidyltransferase family. It depends on Mg(2+) as a cofactor.

It localises to the cytoplasm. The catalysed reaction is RNA(n+1) + phosphate = RNA(n) + a ribonucleoside 5'-diphosphate. In terms of biological role, involved in mRNA degradation. Catalyzes the phosphorolysis of single-stranded polyribonucleotides processively in the 3'- to 5'-direction. This is Polyribonucleotide nucleotidyltransferase from Chlorobium phaeovibrioides (strain DSM 265 / 1930) (Prosthecochloris vibrioformis (strain DSM 265)).